An 88-amino-acid polypeptide reads, in one-letter code: Cuticle protein 70, isoforms A and B (88 aa).

5 tandem repeats follow at residues 7-10 (AAPA), 48-51 (AAPA), 55-58 (AAVP), 60-63 (AAPV), and 66-69 (AAPV).

Its function is as follows. Component of the cuticle of migratory locust which contains more than 100 different structural proteins. This chain is Cuticle protein 70, isoforms A and B, found in Locusta migratoria (Migratory locust).